The sequence spans 141 residues: MALERTLSIIKPDAVERNLVGKILSRFEENGFQIVAMKMLRLNQAQAEGFYAEHQGKPFFDGLVEYMTSAPVVVSVLEKDNAVKDYRTLIGATDPQQAAEGTIRKDFAESRRRNSVHGSDSEESAVREIAYFFVESEICPR.

Residues Lys11, Phe59, Arg87, Thr93, Arg104, and Asn114 each contribute to the ATP site. The active-site Pros-phosphohistidine intermediate is the His117.

Belongs to the NDK family. In terms of assembly, homotetramer. Requires Mg(2+) as cofactor.

The protein resides in the cytoplasm. It catalyses the reaction a 2'-deoxyribonucleoside 5'-diphosphate + ATP = a 2'-deoxyribonucleoside 5'-triphosphate + ADP. It carries out the reaction a ribonucleoside 5'-diphosphate + ATP = a ribonucleoside 5'-triphosphate + ADP. Functionally, major role in the synthesis of nucleoside triphosphates other than ATP. The ATP gamma phosphate is transferred to the NDP beta phosphate via a ping-pong mechanism, using a phosphorylated active-site intermediate. The sequence is that of Nucleoside diphosphate kinase from Actinobacillus succinogenes (strain ATCC 55618 / DSM 22257 / CCUG 43843 / 130Z).